We begin with the raw amino-acid sequence, 236 residues long: uncharacterized protein (236 aa).

The 233-residue stretch at 4–236 (QFLIAYRGYS…VKFQITAQIY (233 aa)) folds into the GP-PDE domain.

The protein to glycerophosphoryl diester phosphodiesterases (EC 3.1.4.46). This sequence to M.genitalium MG293.

This is an uncharacterized protein from Mycoplasma genitalium (strain ATCC 33530 / DSM 19775 / NCTC 10195 / G37) (Mycoplasmoides genitalium).